Consider the following 461-residue polypeptide: MNKPITASTYVRCLSLGLIRKLSDFIDPQEGWKKLAVAIKKPSGDDRYNQFHIRRFEALLQIGKSPTCELLFDWGTTNCTVGDLVDILVQNEFFAPASLLLPDAVPKNVNTLPSKVTVVAVQQKPKPLCGKDRTSVISDENPEQNYVLPDSSSPENTSLEFSDTRFHSFSFFELKDVTNNFDERPISVGGNKMGEGGFGVVYKGYVNNRTVAVKKLAAMVDISTEELKQQFDQEIKVMAKCQHENLVELLGFSSDGDDLCLVYVYMPNGSLLDRLSCLDGTPPLSWNMRCKIAQGAANGLSYLHENHHIHRDIKSANILLDEDFTAKISDFGLARASEKFAQTVMTSRIVGTTAYMAPEALRGEITPKSDIYSFGVVLLEIITGLPAVDEHREPQLLLDIKEEIEDEEKTIEDYVDRKMNDIDSTSIETMYSVASQCLHEKKNKRPDIKKVQQLLEEMTGS.

At Met1 the chain carries N-acetylmethionine. Residues 20–104 form the Death domain; sequence RKLSDFIDPQ…APASLLLPDA (85 aa). Lys34 bears the N6-acetyllysine mark. The Protein kinase domain occupies 187-455; the sequence is SVGGNKMGEG…PDIKKVQQLL (269 aa). ATP-binding positions include 193-201 and Lys214; that span reads MGEGGFGVV. The active-site Proton acceptor is Asp312. ATP is bound by residues 314-317 and Asp330; that span reads KSAN. Residues Thr343 and Thr346 each carry the phosphothreonine modification. Position 347 is a phosphoserine (Ser347).

This sequence belongs to the protein kinase superfamily. TKL Ser/Thr protein kinase family. Pelle subfamily. In terms of assembly, associates with MYD88 and IRAK2 to form a ternary complex called the Myddosome. Once phosphorylated, IRAK4 dissociates from the receptor complex and then associates with the TNF receptor-associated factor 6 (TRAF6), IRAK1, and PELI1; this intermediate complex is required for subsequent NF-kappa-B activation. Direct binding of SMAD6 to PELI1 prevents complex formation and hence negatively regulates IL1R-TLR signaling and eventually NF-kappa-B-mediated gene expression. Interacts with IL1RL1. Interacts (when phosphorylated) with IRAK1. May interact (when phosphorylated) with IRAK3. Mg(2+) is required as a cofactor. Post-translationally, phosphorylated.

The protein localises to the cytoplasm. The enzyme catalyses L-seryl-[protein] + ATP = O-phospho-L-seryl-[protein] + ADP + H(+). It carries out the reaction L-threonyl-[protein] + ATP = O-phospho-L-threonyl-[protein] + ADP + H(+). In terms of biological role, serine/threonine-protein kinase that plays a critical role in initiating innate immune response against foreign pathogens. Involved in Toll-like receptor (TLR) and IL-1R signaling pathways. Is rapidly recruited by MYD88 to the receptor-signaling complex upon TLR activation to form the Myddosome together with IRAK2. Phosphorylates initially IRAK1, thus stimulating the kinase activity and intensive autophosphorylation of IRAK1. Phosphorylates E3 ubiquitin ligases Pellino proteins (PELI1, PELI2 and PELI3) to promote pellino-mediated polyubiquitination of IRAK1. Then, the ubiquitin-binding domain of IKBKG/NEMO binds to polyubiquitinated IRAK1 bringing together the IRAK1-MAP3K7/TAK1-TRAF6 complex and the NEMO-IKKA-IKKB complex. In turn, MAP3K7/TAK1 activates IKKs (CHUK/IKKA and IKBKB/IKKB) leading to NF-kappa-B nuclear translocation and activation. Alternatively, phosphorylates TIRAP to promote its ubiquitination and subsequent degradation. Phosphorylates NCF1 and regulates NADPH oxidase activation after LPS stimulation suggesting a similar mechanism during microbial infections. The sequence is that of Interleukin-1 receptor-associated kinase 4 (IRAK4) from Bos taurus (Bovine).